The sequence spans 126 residues: MPYSKITVPVLVGEGLTEWDVIDVMRETHPPTVEDQYHYHTFDSMQNRTIFVLENPLYPDVDKIPEKVLGIAVDALEDMLDNVPVEDLPVTEEQGNVKRFTTKLASIVFDVFLIIPDFVSVTAKEE.

The sequence is that of Putative gene 48 protein (48) from Bacillus phage SP01 (Bacteriophage SP01).